Reading from the N-terminus, the 251-residue chain is Capsid protein (251 aa).

Residues 1–29 (MPKRDAPWRSMAGTSKVSRNANYSPRSGI) are disordered. The Bipartite nuclear localization signal signature appears at 3–20 (KRDAPWRSMAGTSKVSRN). Positions 12–25 (AGTSKVSRNANYSP) are enriched in polar residues. The Nuclear localization signal signature appears at 35 to 49 (KAAEWVNRPMYRKPR). The segment at 63–80 (CEGPCKVQSFEQRHDILH) is a zinc-finger region. Positions 96-117 (ITHRVGKRFCVKSVYILGKIWM) match the Nuclear export signal motif. A Bipartite nuclear localization signal motif is present at residues 195–242 (RRFWKVNNHVVYNHQEAGKYENHTENALLLYMACTHASNPVYATLKIR).

This sequence belongs to the geminiviridae capsid protein family. In terms of assembly, homomultimer. Binds to single-stranded and double-stranded viral DNA. Interacts (via nuclear localization signals) with host importin alpha-1a.

It is found in the virion. The protein localises to the host nucleus. Its function is as follows. Encapsidates the viral DNA into characteristic twinned ('geminate') particles. Binds the genomic viral ssDNA and shuttles it into and out of the cell nucleus. The CP of bipartite geminiviruses is not required for cell-to-cell or systemic movement. This chain is Capsid protein, found in Solanum tuberosum (Potato).